Reading from the N-terminus, the 1114-residue chain is MRDKKGPVNKRVDFLSNKLNKYSIRKFTVGTASILIGSLMYLGTQQEAEAAENNIENPTTLKDNVQSKEVKIEEVTNKDTAPQGVEAKSEVTSNKDTIEHEASVKAEDISKKEDTPKEVANVAEVQPKSSVTHNAEAPKVRKARSVDEGSFDITRDSKNVVESTPITIQGKEHFEGYGSVDIQKNPTDLGVSEVTRFNVGNESNGLIGALQLKNKIDFSKDFNFKVRVANNHQSNTTGADGWGFLFSKGNAEEYLTNGGILGDKGLVNSGGFKIDTGYIYTSSMDKTEKQAGQGYRGYGAFVKNDSSGNSQMVGENIDKSKTNFLNYADNSTNTSDGKFHGQRLNDVILTYVASTGKMRAEYAGKTWETSITDLGLSKNQAYNFLITSSQRWGLNQGINANGWMRTDLKGSEFTFTPRSAKNNNRIRKKVEEIPFKKERKFNPDLAPGTEKVTREGQKGEKTITTPTLKNPLTGEIISKGESKEEITKDPINELTEYGPETIAPGHRDEFDPKLPTGEKEEVPGKPGIKNPETGDVVRPPVDSVTKYGPVKGDSIVEKEEIPFEKERKFNPDLAPGTEKVTREGQKGEKTTTPTLKNPLTGEIISKGESKEEITKDPINELTEYGPETIAPGHRDEFDPKLPTGEKEEVPGKPGIKNPETGDVVRPPVDSVTKYGPVKGDSIVEKEEIPFKKERKFNPDLAPGTEKVTREGQKGEKTITTPTLKNPLTGEIISKGESKEEITKDPINELTEYGPETITPGHRDEFDPKLPTGEKEEVPGKPGIKNPETGDVVRPPVDSVTKYGPVKGDSIVEKEEIPFEKERKFNPDLAPGTEKVTREGQKGEKTITTPTLKNPLTGEIISKGESKEEITKDPVNELTEFGGEKIPQGHKDIFDPNLPTDQTEKVPGKPGIKNPDTGKVIEEPVDDVIKHGPKTGTPETKTVEIPFETKREFNPKLQPGEERVKQEGQPGSKTITTPITVNPLTGEKVGEGQPTEEITKQPVDKIVEFGGEKPKDPKGPENPEKPSRPTHPSGPVNPNNPGLSKDRAKPNGPVHSMDKNDKVKKSKIAKESVANQEKKRAELPKTGLESTQKGLIFSSIIGIAGLMLLARRRKN.

Positions 1–50 are cleaved as a signal peptide; sequence MRDKKGPVNKRVDFLSNKLNKYSIRKFTVGTASILIGSLMYLGTQQEAEA. 3 disordered regions span residues 76–116, 440–473, and 496–1088; these read TNKD…EDTP, KFNPDLAPGTEKVTREGQKGEKTITTPTLKNPLT, and EYGP…TGLE. Basic and acidic residues-rich tracts occupy residues 96 to 116, 451 to 461, 505 to 523, 554 to 570, and 579 to 589; these read DTIEHEASVKAEDISKKEDTP, KVTREGQKGEK, GHRDEFDPKLPTGEKEEVP, and SIVEKEEIPFEKERKFN. One can recognise a G5 1 domain in the interval 419 to 501; it reads SAKNNNRIRK…NELTEYGPET (83 aa). One can recognise a G5 2 domain in the interval 547–628; it reads YGPVKGDSIV…NELTEYGPET (82 aa). A compositionally biased stretch (low complexity) spans 590 to 604; it reads TTTPTLKNPLTGEII. 11 stretches are compositionally biased toward basic and acidic residues: residues 605–618, 632–650, 681–697, 706–716, 733–746, 760–778, 809–825, 834–844, 861–874, 918–929, and 946–965; these read SKGESKEEITKDPI, GHRDEFDPKLPTGEKEEVP, SIVEKEEIPFKKERKFN, KVTREGQKGEK, SIVEKEEIPFEKERKFN, SKGESKEEITKDPV, KVIEEPVDDVIK, and FETKREFNPKLQPGEERVKQ. The region spanning 674–756 is the G5 3 domain; sequence YGPVKGDSIV…NELTEYGPET (83 aa). The G5 4 domain maps to 802–884; sequence YGPVKGDSIV…NELTEFGGEK (83 aa). The region spanning 930–1012 is the G5 5 domain; that stretch reads HGPKTGTPET…DKIVEFGGEK (83 aa). Over residues 968–982 the composition is skewed to polar residues; sequence QPGSKTITTPITVNP. Over residues 996-1026 the composition is skewed to basic and acidic residues; it reads EITKQPVDKIVEFGGEKPKDPKGPENPEKPS. Residues 1082–1086 carry the LPXTG sorting signal motif; that stretch reads LPKTG. Residue T1085 is modified to Pentaglycyl murein peptidoglycan amidated threonine. Positions 1086 to 1114 are cleaved as a propeptide — removed by sortase; the sequence is GLESTQKGLIFSSIIGIAGLMLLARRRKN.

It is found in the secreted. The protein localises to the cell wall. The chain is Putative surface protein SAV2496/SAV2497 from Staphylococcus aureus (strain Mu50 / ATCC 700699).